Consider the following 197-residue polypeptide: Probable GTP-binding protein EngB (197 aa).

The EngB-type G domain maps to 22–195; it reads ALPELALVGR…WQWIEERTGV (174 aa). GTP is bound by residues 30 to 37, 57 to 61, 75 to 78, 142 to 145, and 174 to 176; these read GRSNVGKS, GKTQT, DVPG, TKVD, and FSA. The Mg(2+) site is built by serine 37 and threonine 59.

It belongs to the TRAFAC class TrmE-Era-EngA-EngB-Septin-like GTPase superfamily. EngB GTPase family. Mg(2+) serves as cofactor.

Its function is as follows. Necessary for normal cell division and for the maintenance of normal septation. In Limosilactobacillus fermentum (strain NBRC 3956 / LMG 18251) (Lactobacillus fermentum), this protein is Probable GTP-binding protein EngB.